Consider the following 394-residue polypeptide: Elongation factor Tu (394 aa).

Residues 10–204 (KPHVNIGTIG…AVDEYIPTPD (195 aa)) form the tr-type G domain. The tract at residues 19–26 (GHIDHGKT) is G1. 19-26 (GHIDHGKT) contacts GTP. Thr-26 contacts Mg(2+). The interval 60–64 (GITIN) is G2. Positions 81-84 (DCPG) are G3. Residues 81 to 85 (DCPGH) and 136 to 139 (NKCD) contribute to the GTP site. The interval 136-139 (NKCD) is G4. The segment at 174–176 (SAL) is G5.

It belongs to the TRAFAC class translation factor GTPase superfamily. Classic translation factor GTPase family. EF-Tu/EF-1A subfamily. As to quaternary structure, monomer.

The protein localises to the cytoplasm. It catalyses the reaction GTP + H2O = GDP + phosphate + H(+). Its function is as follows. GTP hydrolase that promotes the GTP-dependent binding of aminoacyl-tRNA to the A-site of ribosomes during protein biosynthesis. The protein is Elongation factor Tu of Mycoplasmoides gallisepticum (strain R(low / passage 15 / clone 2)) (Mycoplasma gallisepticum).